The primary structure comprises 371 residues: Trans-enoyl reductase mycC (371 aa).

51–54 (CDWK) lines the NADP(+) pocket. 140–147 (CVVGTVGL) contributes to the substrate binding site. Residues 182-185 (STAS), 205-208 (SPAN), Y223, and 270-271 (FE) each bind NADP(+). 291–295 (GIRLL) is a binding site for substrate. Residue 361–362 (VS) participates in NADP(+) binding.

It belongs to the zinc-containing alcohol dehydrogenase family. In terms of assembly, monomer.

It carries out the reaction L-leucine + 8 malonyl-CoA + 4 S-adenosyl-L-methionine + ATP + 9 NADPH + 12 H(+) = (5S)-5-(2-methylpropyl)-3-[(2E,6R,8E,10E,12E)-6,8,10,12-tetramethyltetradeca-2,8,10,12-tetraenoyl]-2,5-dihydro-1H-pyrrol-2-one + AMP + 4 S-adenosyl-L-homocysteine + 8 CO2 + diphosphate + 9 NADP(+) + 8 CoA + 7 H2O. The protein operates within mycotoxin biosynthesis. Functionally, trans-enoyl reductase; part of the gene cluster that mediates the biosynthesis of myceliothermophins, mycotoxins that contain a trans-fused decalin ring system connected to a conjugated 3-pyrrolin-2-one moiety and that have potential anti-tumor properties. The polyketide synthase module (PKS) of the PKS-NRPS mycA is responsible for the synthesis of the octaketide backbone. The downstream nonribosomal peptide synthetase (NRPS) module then amidates the carboxyl end of the octaketide with a leucine. A reductase-like domain (R) at the C-terminus catalyzes the reductive release of the polyketide-amino acid intermediate. Because mycA lacks a designated enoylreductase (ER) domain, the required activity is provided the enoyl reductase mycC. Following mycA-catalyzed construction and release of aminoacyl polyketide aldehyde, Knoevenagel condensation yields the expected ketone. This C18 keto acyclic precursor is the substrate of the Diels-Alderase mycB, that catalyzes the Diels-Alder cycloaddition to produce myceliothermophin E. A yet unknown oxygenase involved in the production of myceliothermophin A, via substitution with a hydroxyl group at the C21, has still to be identified. This is Trans-enoyl reductase mycC from Thermothelomyces thermophilus (strain ATCC 42464 / BCRC 31852 / DSM 1799) (Sporotrichum thermophile).